Reading from the N-terminus, the 425-residue chain is Dihydroorotase (425 aa).

Residues His-56 and His-58 each coordinate Zn(2+). Substrate-binding positions include 58–60 (HWR) and Asn-90. Zn(2+) is bound by residues Asp-147, His-174, and His-227. Residue Asn-273 participates in substrate binding. Position 300 (Asp-300) interacts with Zn(2+). Asp-300 is an active-site residue. Residues His-304 and 318 to 319 (FG) contribute to the substrate site.

This sequence belongs to the metallo-dependent hydrolases superfamily. DHOase family. Class I DHOase subfamily. Requires Zn(2+) as cofactor.

It catalyses the reaction (S)-dihydroorotate + H2O = N-carbamoyl-L-aspartate + H(+). Its pathway is pyrimidine metabolism; UMP biosynthesis via de novo pathway; (S)-dihydroorotate from bicarbonate: step 3/3. Catalyzes the reversible cyclization of carbamoyl aspartate to dihydroorotate. The chain is Dihydroorotase from Fusobacterium nucleatum subsp. nucleatum (strain ATCC 25586 / DSM 15643 / BCRC 10681 / CIP 101130 / JCM 8532 / KCTC 2640 / LMG 13131 / VPI 4355).